The following is a 230-amino-acid chain: Cytidylate kinase (230 aa).

Residue 12-20 coordinates ATP; it reads GPSGAGKGT.

The protein belongs to the cytidylate kinase family. Type 1 subfamily.

The protein localises to the cytoplasm. It catalyses the reaction CMP + ATP = CDP + ADP. The catalysed reaction is dCMP + ATP = dCDP + ADP. This is Cytidylate kinase from Shewanella oneidensis (strain ATCC 700550 / JCM 31522 / CIP 106686 / LMG 19005 / NCIMB 14063 / MR-1).